Consider the following 258-residue polypeptide: Development-specific 25 kDa protein (258 aa).

10–34 provides a ligand contact to NAD(+); that stretch reads VYVGGFSGFGYQVCQMMMKKPMKHL. Substrate is bound at residue S138. Catalysis depends on Y151, which acts as the Proton acceptor.

Belongs to the short-chain dehydrogenases/reductases (SDR) family.

The polypeptide is Development-specific 25 kDa protein (Sarcophaga peregrina (Flesh fly)).